Reading from the N-terminus, the 515-residue chain is MDEFHRCGKEDSFWQQCFLYPLFFKEDLYAISHDHYLDVSSSSRPMEHLSSNDQLSFLTVKRLIGQIRKQNHSIVLFVNCDPNPLADRKKSFYSESVLEALTLVLEVPFSIWSKYSVEGMNESKSFRSIHSIFPFLEDKFPHSNSILDARIPYSIHPEILVRTFRRWIRDAPSLHPLRSVLYEYRNSTENLQRSIIVVPRVNTRFFLFLWNYYVCECESILFSRLKRSSHSRSLSHGSFPQRTHFHRKIKHIIIFSRRNSLKSIWSLKDPKIHYVRYGERPIIAIKGAHLLVKKCRYYLLIFRQFYFHLWSEPYRVCSHQLSKNCSSSPGYFLRVRMNPILVRTKMLDELFIADLITDEIDPIVPIVPIIGLLATEKFCDISGRPISKLSWTSLTDDDILDRFDQIWRNLFHYYSGSFDRDGLYRIKYILSLSCAKTLACKHKSTIRVVRKELGPELFKKSFSKEREFDSLRFSSKAAARSQRERIWHSDIPQINPLANSWQKIQDLKIENLFDQ.

The protein belongs to the intron maturase 2 family. MatK subfamily.

Its subcellular location is the plastid. It localises to the chloroplast. Usually encoded in the trnK tRNA gene intron. Probably assists in splicing its own and other chloroplast group II introns. The sequence is that of Maturase K from Pinus clausa (Sand pine).